Here is a 317-residue protein sequence, read N- to C-terminus: Dehydrogenase/reductase SDR family member 12 (317 aa).

NAD(+)-binding residues include serine 50 and isoleucine 52. Serine 175 serves as a coordination point for substrate. Tyrosine 201, lysine 205, and threonine 234 together coordinate NAD(+). The Proton acceptor role is filled by tyrosine 201.

This sequence belongs to the short-chain dehydrogenases/reductases (SDR) family.

Putative oxidoreductase. The sequence is that of Dehydrogenase/reductase SDR family member 12 from Homo sapiens (Human).